Consider the following 140-residue polypeptide: uncharacterized protein (140 aa).

Transmembrane regions (helical) follow at residues 20–42 (ILYYGGLIGIIFMAITFAIYVSG), 88–110 (FVALAFLAMITIICYLAIIPVLL), and 115–137 (IIYTILAIAEVIILLLAASGLLQ).

The protein resides in the cell membrane. This is an uncharacterized protein from Archaeoglobus fulgidus (strain ATCC 49558 / DSM 4304 / JCM 9628 / NBRC 100126 / VC-16).